The chain runs to 4250 residues: Dynein axonemal heavy chain 1 (4250 aa).

The segment at 1–73 is disordered; the sequence is MEECNKEGPS…KSPLTGTDKK (73 aa). The stem stretch occupies residues 1–1527; it reads MEECNKEGPS…YIRAVNAEFI (1527 aa). Residues 24–42 show a composition bias toward basic and acidic residues; that stretch reads PESHDLEKILQESNYHPER. Positions 46–55 are enriched in pro residues; it reads NPDPKTPPLP. 4 AAA regions span residues 1528–1749, 1809–2042, 2174–2434, and 2532–2784; these read YGYE…VISA, QAIR…NTVK, TMMP…VFQG, and DYNQ…LARH. A GPAGTGKT motif motif is present at residues 1566–1573; sequence GPAGTGKT. Position 1566-1573 (1566-1573) interacts with ATP; that stretch reads GPAGTGKT. Residues 1616 to 1622 carry the CFDEFNR motif motif; sequence CFDEFNR. Residues 1847–1854, 2212–2219, and 2571–2578 contribute to the ATP site; these read GPTGSGKS, GPTGTGKT, and GVGGSGRS. The tract at residues 2799-3097 is stalk; sequence FSILIGQKKM…EELEMKCEQC (299 aa). Residues 3045 to 3128 are a coiled coil; it reads LREAQDDLEV…QETVENLENM (84 aa). AAA regions lie at residues 3182–3412 and 3625–3844; these read LGNP…EIQA and MQDF…QLKM.

It belongs to the dynein heavy chain family. As to quaternary structure, consists of at least two heavy chains and a number of intermediate and light chains.

It localises to the cytoplasm. The protein localises to the cytoskeleton. Its subcellular location is the cilium axoneme. The protein resides in the cell projection. It is found in the cilium. It localises to the flagellum. In terms of biological role, force generating protein of cilia required for sperm flagellum motility. Produces force towards the minus ends of microtubules. Dynein has ATPase activity; the force-producing power stroke is thought to occur on release of ADP. Required in spermatozoa for the formation of the inner dynein arms and biogenesis of the axoneme. In Mus musculus (Mouse), this protein is Dynein axonemal heavy chain 1.